Here is a 533-residue protein sequence, read N- to C-terminus: Flavin-containing monooxygenase 5 (533 aa).

R5 carries the dimethylated arginine modification. Residues G10–S14, E33, and L41–W42 each bind FAD. Position 54 is a phosphoserine (S54). At Y56 the chain carries Phosphotyrosine. S58 carries the post-translational modification Phosphoserine. Position 62 to 63 (N62 to T63) interacts with FAD. S196–D199 serves as a coordination point for NADP(+). At S280 the chain carries Phosphoserine. At T284 the chain carries Phosphothreonine. S401 is modified (phosphoserine). The chain crosses the membrane as a helical span at residues M510–M530.

Belongs to the FMO family. It depends on FAD as a cofactor. As to expression, expressed in liver.

Its subcellular location is the microsome membrane. The protein resides in the endoplasmic reticulum membrane. It carries out the reaction N,N-dimethylaniline + NADPH + O2 + H(+) = N,N-dimethylaniline N-oxide + NADP(+) + H2O. The catalysed reaction is NADPH + O2 + H(+) = H2O2 + NADP(+). It catalyses the reaction heptan-2-one + NADPH + O2 + H(+) = pentyl acetate + NADP(+) + H2O. The enzyme catalyses octan-3-one + NADPH + O2 + H(+) = pentyl propanoate + NADP(+) + H2O. It carries out the reaction octan-3-one + NADPH + O2 + H(+) = ethyl hexanoate + NADP(+) + H2O. The catalysed reaction is hexan-3-one + NADPH + O2 + H(+) = ethyl butanoate + NADP(+) + H2O. It catalyses the reaction hexan-3-one + NADPH + O2 + H(+) = propyl propanoate + NADP(+) + H2O. The enzyme catalyses heptan-4-one + NADPH + O2 + H(+) = propyl butanoate + NADP(+) + H2O. It carries out the reaction (2E)-geranial + NADPH + O2 + H(+) = (1E)-2,6-dimethylhepta-1,5-dien-1-yl formate + NADP(+) + H2O. The catalysed reaction is sulcatone + NADPH + O2 + H(+) = 4-methylpent-3-en-1-yl acetate + NADP(+) + H2O. Acts as a Baeyer-Villiger monooxygenase on a broad range of substrates. Catalyzes the insertion of an oxygen atom into a carbon-carbon bond adjacent to a carbonyl, which converts ketones to esters. Active on diverse carbonyl compounds, whereas soft nucleophiles are mostly non- or poorly reactive. In contrast with other forms of FMO it is non- or poorly active on 'classical' substrates such as drugs, pesticides, and dietary components containing soft nucleophilic heteroatoms. Able to oxidize drug molecules bearing a carbonyl group on an aliphatic chain, such as nabumetone and pentoxifylline. Also, in the absence of substrates, shows slow but yet significant NADPH oxidase activity. Acts as a positive modulator of cholesterol biosynthesis as well as glucose homeostasis, promoting metabolic aging via pleiotropic effects. In Cavia porcellus (Guinea pig), this protein is Flavin-containing monooxygenase 5 (FMO5).